Consider the following 98-residue polypeptide: Integration host factor subunit alpha (98 aa).

The disordered stretch occupies residues 51–71; sequence NFDLRDKNERPGRNPKTGEDI. The segment covering 53–69 has biased composition (basic and acidic residues); it reads DLRDKNERPGRNPKTGE.

This sequence belongs to the bacterial histone-like protein family. As to quaternary structure, heterodimer of an alpha and a beta chain.

In terms of biological role, this protein is one of the two subunits of integration host factor, a specific DNA-binding protein that functions in genetic recombination as well as in transcriptional and translational control. In Vibrio parahaemolyticus serotype O3:K6 (strain RIMD 2210633), this protein is Integration host factor subunit alpha.